We begin with the raw amino-acid sequence, 201 residues long: Orotate phosphoribosyltransferase (201 aa).

Residue 113–121 coordinates 5-phospho-alpha-D-ribose 1-diphosphate; the sequence is EDIITTGKS. Residues Thr-117 and Arg-145 each coordinate orotate.

It belongs to the purine/pyrimidine phosphoribosyltransferase family. PyrE subfamily. As to quaternary structure, homodimer. Mg(2+) serves as cofactor.

It catalyses the reaction orotidine 5'-phosphate + diphosphate = orotate + 5-phospho-alpha-D-ribose 1-diphosphate. It participates in pyrimidine metabolism; UMP biosynthesis via de novo pathway; UMP from orotate: step 1/2. Its function is as follows. Catalyzes the transfer of a ribosyl phosphate group from 5-phosphoribose 1-diphosphate to orotate, leading to the formation of orotidine monophosphate (OMP). This is Orotate phosphoribosyltransferase from Helicobacter pylori (strain HPAG1).